The primary structure comprises 407 residues: uncharacterized protein (407 aa).

Residues 1–250 (MLDPLDILTN…LERDVLKQRL (250 aa)) form the EAL domain.

This is an uncharacterized protein from Bacillus subtilis (strain 168).